Here is a 158-residue protein sequence, read N- to C-terminus: NADH-quinone oxidoreductase subunit B (158 aa).

4 residues coordinate [4Fe-4S] cluster: C37, C38, C102, and C132.

Belongs to the complex I 20 kDa subunit family. In terms of assembly, NDH-1 is composed of 14 different subunits. Subunits NuoB, C, D, E, F, and G constitute the peripheral sector of the complex. The cofactor is [4Fe-4S] cluster.

The protein resides in the cell inner membrane. The catalysed reaction is a quinone + NADH + 5 H(+)(in) = a quinol + NAD(+) + 4 H(+)(out). In terms of biological role, NDH-1 shuttles electrons from NADH, via FMN and iron-sulfur (Fe-S) centers, to quinones in the respiratory chain. The immediate electron acceptor for the enzyme in this species is believed to be ubiquinone. Couples the redox reaction to proton translocation (for every two electrons transferred, four hydrogen ions are translocated across the cytoplasmic membrane), and thus conserves the redox energy in a proton gradient. This Thioalkalivibrio sulfidiphilus (strain HL-EbGR7) protein is NADH-quinone oxidoreductase subunit B.